A 227-amino-acid polypeptide reads, in one-letter code: Probable GTP-binding protein EngB (227 aa).

The 176-residue stretch at Ile13–Tyr188 folds into the EngB-type G domain. Residues Gly21 to Ser28, Gly48 to Met52, Asp67 to Gly70, Thr134 to Asp137, and Phe167 to Ala169 contribute to the GTP site. Positions 28 and 50 each coordinate Mg(2+).

This sequence belongs to the TRAFAC class TrmE-Era-EngA-EngB-Septin-like GTPase superfamily. EngB GTPase family. Requires Mg(2+) as cofactor.

Functionally, necessary for normal cell division and for the maintenance of normal septation. This Psychrobacter cryohalolentis (strain ATCC BAA-1226 / DSM 17306 / VKM B-2378 / K5) protein is Probable GTP-binding protein EngB.